The primary structure comprises 437 residues: tRNA(Ile2) 2-agmatinylcytidine synthetase TiaS (437 aa).

The protein belongs to the TiaS family.

Its subcellular location is the cytoplasm. The enzyme catalyses cytidine(34) in tRNA(Ile2) + agmatine + ATP + H2O = 2-agmatinylcytidine(34) in tRNA(Ile2) + AMP + 2 phosphate + 2 H(+). ATP-dependent agmatine transferase that catalyzes the formation of 2-agmatinylcytidine (agm2C) at the wobble position (C34) of tRNA(Ile2), converting the codon specificity from AUG to AUA. This is tRNA(Ile2) 2-agmatinylcytidine synthetase TiaS from Thermoplasma volcanium (strain ATCC 51530 / DSM 4299 / JCM 9571 / NBRC 15438 / GSS1).